A 238-amino-acid chain; its full sequence is Purine nucleoside phosphorylase DeoD-type (238 aa).

H4 contacts a purine D-ribonucleoside. Phosphate-binding positions include G20, R24, R43, and 87–90 (RVGS). Residues 179 to 181 (EME) and 203 to 204 (SD) each bind a purine D-ribonucleoside. Residue D204 is the Proton donor of the active site.

The protein belongs to the PNP/UDP phosphorylase family. In terms of assembly, homohexamer; trimer of homodimers.

The catalysed reaction is a purine D-ribonucleoside + phosphate = a purine nucleobase + alpha-D-ribose 1-phosphate. It catalyses the reaction a purine 2'-deoxy-D-ribonucleoside + phosphate = a purine nucleobase + 2-deoxy-alpha-D-ribose 1-phosphate. Catalyzes the reversible phosphorolytic breakdown of the N-glycosidic bond in the beta-(deoxy)ribonucleoside molecules, with the formation of the corresponding free purine bases and pentose-1-phosphate. This is Purine nucleoside phosphorylase DeoD-type from Pasteurella multocida (strain Pm70).